A 195-amino-acid chain; its full sequence is Probable GTP-binding protein EngB (195 aa).

The EngB-type G domain occupies 22–194 (LKGEVAFVGR…LDLISTLLKE (173 aa)). GTP-binding positions include 30–37 (GRSNVGKS), 56–60 (GKTRS), 74–77 (DLPG), 141–144 (TKMD), and 173–175 (TSS). The Mg(2+) site is built by serine 37 and threonine 58.

The protein belongs to the TRAFAC class TrmE-Era-EngA-EngB-Septin-like GTPase superfamily. EngB GTPase family. The cofactor is Mg(2+).

Its function is as follows. Necessary for normal cell division and for the maintenance of normal septation. The sequence is that of Probable GTP-binding protein EngB from Thermotoga maritima (strain ATCC 43589 / DSM 3109 / JCM 10099 / NBRC 100826 / MSB8).